The following is a 291-amino-acid chain: Probable cell wall amidase LytH (291 aa).

The first 40 residues, 1-40, serve as a signal peptide directing secretion; the sequence is MKKFNDWLEKHNLRNIPTLIVVVAFVLFVFMTIAFLNHND. Residues 41-105 enclose the SH3b domain; the sequence is EDSSTIYITE…WVAGWHTNLN (65 aa). Residues 109 to 146 are disordered; sequence DKNPNAKPLKDKTIVLDPGHGGSDQGASSNTHKKSKEK. The MurNAc-LAA domain maps to 122–286; the sequence is IVLDPGHGGS…VEQAIVEGLR (165 aa).

The protein belongs to the N-acetylmuramoyl-L-alanine amidase 3 family.

It localises to the secreted. In terms of biological role, probably involved in cell-wall metabolism. The chain is Probable cell wall amidase LytH (lytH) from Staphylococcus saprophyticus subsp. saprophyticus (strain ATCC 15305 / DSM 20229 / NCIMB 8711 / NCTC 7292 / S-41).